A 173-amino-acid polypeptide reads, in one-letter code: MSAKNPWFWLAAILAIALDRLTKVWVVAQLAPGESIALWPGVFHLTLVKNSGAAFSLFAGGSDWLKWISLLVSVGLCVYALVGPHLGSWEQMGFGLLLGGAVGNGFDRFAFGEVTDFLDFRLIQFPVFNGADIAINLGLACLLIGTLRSESRTPAPARPASKQIREPTDTTGG.

The next 2 helical transmembrane spans lie at 67 to 87 and 92 to 112; these read WISL…PHLG and MGFG…FAFG. Catalysis depends on residues aspartate 116 and aspartate 132. Residues 125-145 form a helical membrane-spanning segment; that stretch reads FPVFNGADIAINLGLACLLIG. The interval 151-173 is disordered; sequence SRTPAPARPASKQIREPTDTTGG. A compositionally biased stretch (basic and acidic residues) spans 163-173; that stretch reads QIREPTDTTGG.

This sequence belongs to the peptidase A8 family.

The protein localises to the cell inner membrane. It carries out the reaction Release of signal peptides from bacterial membrane prolipoproteins. Hydrolyzes -Xaa-Yaa-Zaa-|-(S,diacylglyceryl)Cys-, in which Xaa is hydrophobic (preferably Leu), and Yaa (Ala or Ser) and Zaa (Gly or Ala) have small, neutral side chains.. The protein operates within protein modification; lipoprotein biosynthesis (signal peptide cleavage). This protein specifically catalyzes the removal of signal peptides from prolipoproteins. The protein is Lipoprotein signal peptidase of Gloeobacter violaceus (strain ATCC 29082 / PCC 7421).